A 374-amino-acid chain; its full sequence is Tomoregulin-2 (374 aa).

A signal peptide spans 1-40; it reads MVLWESPRQCSSWTLCEGFCWLLLLPVMLLIVARPVKLAA. The Extracellular portion of the chain corresponds to 41-320; the sequence is FPTSLSDCQT…VPGPVRFQYV (280 aa). 2 consecutive Kazal-like domains span residues 90–137 and 181–229; these read VCQF…SCAT and VCNI…RCQD. 6 disulfide bridges follow: Cys-91–Cys-121, Cys-95–Cys-114, Cys-103–Cys-135, Cys-182–Cys-213, Cys-186–Cys-206, and Cys-195–Cys-227. An N-linked (GlcNAc...) (complex) asparagine; atypical glycan is attached at Asn-204. Asn-230 is a glycosylation site (N-linked (GlcNAc...) asparagine). In terms of domain architecture, EGF-like spans 261-301; sequence HHIPCPEHYNGFCMHGKCEHSINMQEPSCRCDAGYTGQHCE. 3 cysteine pairs are disulfide-bonded: Cys-265/Cys-278, Cys-273/Cys-289, and Cys-291/Cys-300. The segment at 303 to 320 is required for shedding; it reads KDYSVLYVVPGPVRFQYV. A helical membrane pass occupies residues 321-341; sequence LIAAVIGTIQIAVICVVVLCI. The Cytoplasmic segment spans residues 342–374; that stretch reads TRKCPRSNRIHRQKQNTGHYSSDNTTRASTRLI. Residues 353 to 374 are disordered; that stretch reads RQKQNTGHYSSDNTTRASTRLI. A compositionally biased stretch (polar residues) spans 356–374; sequence QNTGHYSSDNTTRASTRLI.

The protein belongs to the tomoregulin family. In terms of processing, O-glycosylated; contains chondroitin sulfate glycosaminoglycans. A soluble form (TMEFF2-ECD) is produced by proteolytic shedding. This shedding can be induced by phorbol ester or pro-inflammatory cytokines such as TNFalpha, and is mediated by ADAM17. As to expression, highly expressed in adult and fetal brain, spinal cord and prostate. Expressed in all brain regions except the pituitary gland, with highest levels in amygdala and corpus callosum. Expressed in the pericryptal myofibroblasts and other stromal cells of normal colonic mucosa. Expressed in prostate carcinoma. Down-regulated in colorectal cancer. Present in Alzheimer disease plaques (at protein level). Isoform 3 is expressed weakly in testis and at high levels in normal and cancerous prostate.

The protein localises to the membrane. The protein resides in the secreted. In terms of biological role, may be a survival factor for hippocampal and mesencephalic neurons. The shedded form up-regulates cancer cell proliferation, probably by promoting ERK1/2 phosphorylation. The chain is Tomoregulin-2 (TMEFF2) from Homo sapiens (Human).